A 688-amino-acid polypeptide reads, in one-letter code: Glycine--tRNA ligase beta subunit (688 aa).

The protein belongs to the class-II aminoacyl-tRNA synthetase family. Tetramer of two alpha and two beta subunits.

It is found in the cytoplasm. The catalysed reaction is tRNA(Gly) + glycine + ATP = glycyl-tRNA(Gly) + AMP + diphosphate. The chain is Glycine--tRNA ligase beta subunit from Shewanella oneidensis (strain ATCC 700550 / JCM 31522 / CIP 106686 / LMG 19005 / NCIMB 14063 / MR-1).